Reading from the N-terminus, the 392-residue chain is Integrin-linked kinase-associated serine/threonine phosphatase 2C (392 aa).

N-acetylmethionine is present on Met1. A disordered region spans residues Met1–Glu91. The segment covering Ser56–Val70 has biased composition (polar residues). Basic and acidic residues predominate over residues Thr72 to Glu91. The PPM-type phosphatase domain maps to Lys108–Ile390. The Mn(2+) site is built by Asp152 and Gly153. N6-acetyllysine is present on Lys210. Asp326 and Asp381 together coordinate Mn(2+).

Belongs to the PP2C family. In terms of assembly, interacts with ILK. The cofactor is Mg(2+). Requires Mn(2+) as cofactor.

The protein localises to the cytoplasm. The enzyme catalyses O-phospho-L-seryl-[protein] + H2O = L-seryl-[protein] + phosphate. It catalyses the reaction O-phospho-L-threonyl-[protein] + H2O = L-threonyl-[protein] + phosphate. Protein phosphatase that may play a role in regulation of cell cycle progression via dephosphorylation of its substrates whose appropriate phosphorylation states might be crucial for cell proliferation. Selectively associates with integrin linked kinase (ILK), to modulate cell adhesion and growth factor signaling. Inhibits the ILK-GSK3B signaling axis and may play an important role in inhibiting oncogenic transformation. In Mus musculus (Mouse), this protein is Integrin-linked kinase-associated serine/threonine phosphatase 2C (Ilkap).